We begin with the raw amino-acid sequence, 968 residues long: Phosphatidylserine decarboxylase 2 proenzyme (968 aa).

Residues 1-25 form the signal peptide; sequence MAKVMRLIIFVCVALVAISVPAASS. Catalysis depends on charge relay system; for autoendoproteolytic cleavage activity residues aspartate 500, histidine 570, and serine 683. Residue serine 683 is the Schiff-base intermediate with substrate; via pyruvic acid; for decarboxylase activity of the active site. The residue at position 683 (serine 683) is a Pyruvic acid (Ser); by autocatalysis.

It belongs to the phosphatidylserine decarboxylase family. Heterodimer of a large membrane-associated beta subunit and a small pyruvoyl-containing alpha subunit. Pyruvate is required as a cofactor. Is synthesized initially as an inactive proenzyme. Formation of the active enzyme involves a self-maturation process in which the active site pyruvoyl group is generated from an internal serine residue via an autocatalytic post-translational modification. Two non-identical subunits are generated from the proenzyme in this reaction, and the pyruvate is formed at the N-terminus of the alpha chain, which is derived from the carboxyl end of the proenzyme. The autoendoproteolytic cleavage occurs by a canonical serine protease mechanism, in which the side chain hydroxyl group of the serine supplies its oxygen atom to form the C-terminus of the beta chain, while the remainder of the serine residue undergoes an oxidative deamination to produce ammonia and the pyruvoyl prosthetic group on the alpha chain. During this reaction, the Ser that is part of the protease active site of the proenzyme becomes the pyruvoyl prosthetic group, which constitutes an essential element of the active site of the mature decarboxylase.

It localises to the parasitophorous vacuole. The protein resides in the cytoplasmic vesicle. The protein localises to the secretory vesicle. The enzyme catalyses a 1,2-diacyl-sn-glycero-3-phospho-L-serine + H(+) = a 1,2-diacyl-sn-glycero-3-phosphoethanolamine + CO2. Its pathway is phospholipid metabolism; phosphatidylethanolamine biosynthesis; phosphatidylethanolamine from CDP-diacylglycerol: step 2/2. Its function is as follows. Catalyzes the formation of phosphatidylethanolamine (PtdEtn) from phosphatidylserine (PtdSer). Plays a central role in phospholipid metabolism and in the interorganelle trafficking of phosphatidylserine. Can act on liposomal and host cell PtdSer. The protein is Phosphatidylserine decarboxylase 2 proenzyme of Toxoplasma gondii (strain ATCC 50853 / GT1).